The chain runs to 104 residues: MQVITLQKPSKKITYRTTYILKPSLTEEEITKEIEDYQKLLIDNGAEDIIIENTGKCRLAYLINKQNDGIYFQITYRGANTLVNILQRRMRLSINTLRYQTFKV.

This sequence belongs to the bacterial ribosomal protein bS6 family.

The protein resides in the plastid. Its subcellular location is the cyanelle. Its function is as follows. Binds together with bS18 to 16S ribosomal RNA. The protein is Small ribosomal subunit protein bS6c (rps6) of Cyanophora paradoxa.